The chain runs to 459 residues: Cysteine--tRNA ligase (459 aa).

Residue Cys29 participates in Zn(2+) binding. A 'HIGH' region motif is present at residues 31–41 (MTVYDLCHLGH). Residues Cys213, His238, and Glu242 each coordinate Zn(2+). The 'KMSKS' region motif lies at 270–274 (KMSKS). Lys273 contacts ATP.

This sequence belongs to the class-I aminoacyl-tRNA synthetase family. In terms of assembly, monomer. The cofactor is Zn(2+).

The protein localises to the cytoplasm. The catalysed reaction is tRNA(Cys) + L-cysteine + ATP = L-cysteinyl-tRNA(Cys) + AMP + diphosphate. The protein is Cysteine--tRNA ligase of Variovorax paradoxus (strain S110).